A 425-amino-acid chain; its full sequence is Pectate lyase L (425 aa).

The signal sequence occupies residues 1–25; it reads MKYLNCFISTGLAAFFLVNSTSVLA. Cysteine 28 and cysteine 114 are disulfide-bonded. 4 residues coordinate Ca(2+): aspartate 209, aspartate 233, aspartate 234, and aspartate 237. Catalysis depends on lysine 273, which acts as the Proton acceptor. Residues asparagine 402, serine 413, alanine 416, aspartate 418, and glutamate 423 each coordinate Ca(2+).

This sequence belongs to the polysaccharide lyase 9 family. The cofactor is Ca(2+).

The protein localises to the secreted. The catalysed reaction is Eliminative cleavage of (1-&gt;4)-alpha-D-galacturonan to give oligosaccharides with 4-deoxy-alpha-D-galact-4-enuronosyl groups at their non-reducing ends.. It functions in the pathway glycan metabolism; pectin degradation; 2-dehydro-3-deoxy-D-gluconate from pectin: step 2/5. In terms of biological role, presents an endo-cleaving activity on polygalacturonate or partially methylated pectin. The sequence is that of Pectate lyase L (pelL) from Dickeya chrysanthemi (Pectobacterium chrysanthemi).